The following is a 134-amino-acid chain: MGKDTIADIITSIRNADMEKKGTVRIASTNINISENIVQILLREGFIENVRKHRENNKYFLVSTLRHRRNRKGAYRNILKRISRPGLRIYSNYQRIPRILGGMGIVILSTSRGIMTDREARLEGIGGEILCYIW.

It belongs to the universal ribosomal protein uS8 family. As to quaternary structure, part of the 30S ribosomal subunit.

The protein resides in the plastid. It localises to the chloroplast. One of the primary rRNA binding proteins, it binds directly to 16S rRNA central domain where it helps coordinate assembly of the platform of the 30S subunit. This chain is Small ribosomal subunit protein uS8c (rps8), found in Chloranthus spicatus (Chulantree).